A 116-amino-acid chain; its full sequence is U16-barytoxin-Tl1a (116 aa).

The N-terminal stretch at 1 to 20 (MKTIIVFLSLLVLATKFGDA) is a signal peptide. The propeptide occupies 21–74 (KEGVNQKQKKEVTQNEFREEYLNEMAAMSLVQQLEAIERALFENEAGRNSRQKR). 3 disulfides stabilise this stretch: Cys75-Cys90, Cys82-Cys95, and Cys89-Cys110.

The protein belongs to the neurotoxin 14 (magi-1) family. 06 (ICK-Trit) subfamily. In terms of tissue distribution, expressed by the venom gland.

The protein localises to the secreted. Its function is as follows. Ion channel inhibitor. The polypeptide is U16-barytoxin-Tl1a (Trittame loki (Brush-footed trapdoor spider)).